The sequence spans 800 residues: uncharacterized protein (800 aa).

A signal peptide spans methionine 1–alanine 21. Residues serine 63–isoleucine 72 are compositionally biased toward polar residues. Disordered regions lie at residues serine 63 to threonine 470, threonine 602 to serine 670, and serine 710 to serine 776. Composition is skewed to low complexity over residues threonine 73 to serine 314, serine 321 to serine 368, serine 375 to proline 444, and threonine 451 to threonine 470. Residues serine 710–threonine 720 show a composition bias toward low complexity. Polar residues predominate over residues glutamate 721–lysine 734. The segment covering threonine 735–serine 776 has biased composition (low complexity).

It localises to the secreted. The protein resides in the cell surface. This is an uncharacterized protein from Schizosaccharomyces pombe (strain 972 / ATCC 24843) (Fission yeast).